The sequence spans 155 residues: SsrA-binding protein (155 aa).

Belongs to the SmpB family.

The protein resides in the cytoplasm. Its function is as follows. Required for rescue of stalled ribosomes mediated by trans-translation. Binds to transfer-messenger RNA (tmRNA), required for stable association of tmRNA with ribosomes. tmRNA and SmpB together mimic tRNA shape, replacing the anticodon stem-loop with SmpB. tmRNA is encoded by the ssrA gene; the 2 termini fold to resemble tRNA(Ala) and it encodes a 'tag peptide', a short internal open reading frame. During trans-translation Ala-aminoacylated tmRNA acts like a tRNA, entering the A-site of stalled ribosomes, displacing the stalled mRNA. The ribosome then switches to translate the ORF on the tmRNA; the nascent peptide is terminated with the 'tag peptide' encoded by the tmRNA and targeted for degradation. The ribosome is freed to recommence translation, which seems to be the essential function of trans-translation. This chain is SsrA-binding protein, found in Streptococcus pneumoniae (strain P1031).